Consider the following 229-residue polypeptide: Large ribosomal subunit protein uL1 (229 aa).

The protein belongs to the universal ribosomal protein uL1 family. As to quaternary structure, part of the 50S ribosomal subunit.

Its function is as follows. Binds directly to 23S rRNA. The L1 stalk is quite mobile in the ribosome, and is involved in E site tRNA release. Functionally, protein L1 is also a translational repressor protein, it controls the translation of the L11 operon by binding to its mRNA. This chain is Large ribosomal subunit protein uL1, found in Actinobacillus pleuropneumoniae serotype 5b (strain L20).